The following is a 484-amino-acid chain: Synaptic vesicle membrane protein VAT-1 homolog (484 aa).

2 stretches are compositionally biased toward low complexity: residues 1–13 (MSGEDAPAQQQNA) and 40–61 (SASTEAAATAAAAADTPAPAAE). Disordered regions lie at residues 1-65 (MSGE…KAPE) and 402-484 (IGKI…KEEN). Residues 411 to 484 (PMKEEEKKEE…KKEEVKKEEN (74 aa)) are compositionally biased toward basic and acidic residues.

The protein belongs to the zinc-containing alcohol dehydrogenase family. Quinone oxidoreductase subfamily.

The polypeptide is Synaptic vesicle membrane protein VAT-1 homolog (Danio rerio (Zebrafish)).